Reading from the N-terminus, the 166-residue chain is Endoribonuclease YbeY (166 aa).

3 residues coordinate Zn(2+): histidine 125, histidine 129, and histidine 135.

This sequence belongs to the endoribonuclease YbeY family. Zn(2+) serves as cofactor.

It localises to the cytoplasm. Single strand-specific metallo-endoribonuclease involved in late-stage 70S ribosome quality control and in maturation of the 3' terminus of the 16S rRNA. The protein is Endoribonuclease YbeY of Alkalilimnicola ehrlichii (strain ATCC BAA-1101 / DSM 17681 / MLHE-1).